We begin with the raw amino-acid sequence, 154 residues long: MNAVQVKILNPKIGTDANFPMPTRATDGSAGIDLRACIDEPITIKAGETKLIGTGMAIYIADPNYAGIILPRSGLGHKHGIVLGNLVGLIDADYQGELMVSVWNRSDTDFVLNPAERMAQYMVVPVVRPSFQVVEEFNELSARGAGGFGHSGRQ.

Substrate contacts are provided by residues 72–74 (RSG), N85, 89–91 (LID), and M99.

Belongs to the dUTPase family. The cofactor is Mg(2+).

It carries out the reaction dUTP + H2O = dUMP + diphosphate + H(+). The protein operates within pyrimidine metabolism; dUMP biosynthesis; dUMP from dCTP (dUTP route): step 2/2. This enzyme is involved in nucleotide metabolism: it produces dUMP, the immediate precursor of thymidine nucleotides and it decreases the intracellular concentration of dUTP so that uracil cannot be incorporated into DNA. This chain is Deoxyuridine 5'-triphosphate nucleotidohydrolase, found in Psychrobacter sp. (strain PRwf-1).